Consider the following 344-residue polypeptide: Enoyl-[acyl-carrier-protein] reductase, mitochondrial (344 aa).

Residues 1–14 constitute a mitochondrion transit peptide; it reads MLKVLSLRSALQRA. Y69 (proton donor) is an active-site residue. Residues N142, 168-171, 191-193, 255-258, 280-282, and K338 each bind NADP(+); these read NSAV, RSR, YGGM, and FWM.

Belongs to the zinc-containing alcohol dehydrogenase family. Quinone oxidoreductase subfamily. Homodimer.

Its subcellular location is the mitochondrion. It catalyses the reaction a 2,3-saturated acyl-[ACP] + NADP(+) = a (2E)-enoyl-[ACP] + NADPH + H(+). Catalyzes the NADPH-dependent reduction of trans-2-enoyl thioesters in mitochondrial fatty acid synthesis (fatty acid synthesis type II). Fatty acid chain elongation in mitochondria uses acyl carrier protein (ACP) as an acyl group carrier, but the enzyme accepts both ACP and CoA thioesters as substrates in vitro. May provide the octanoyl chain used for lipoic acid biosynthesis, regulating protein lipoylation and mitochondrial respiratory activity. Involved in iron homeostasis; affecting Fe-S cluster assembly and ceramide metabolism. Required for proper morphology and bioenergetic functions of mitochondria. Required for maintenance of neurons. This chain is Enoyl-[acyl-carrier-protein] reductase, mitochondrial, found in Caenorhabditis elegans.